Reading from the N-terminus, the 330-residue chain is tRNA uridine(34) hydroxylase (330 aa).

Residues 123–217 form the Rhodanese domain; the sequence is SDPEVILVDT…YLEEVKQEES (95 aa). Cys-177 serves as the catalytic Cysteine persulfide intermediate.

It belongs to the TrhO family.

It catalyses the reaction uridine(34) in tRNA + AH2 + O2 = 5-hydroxyuridine(34) in tRNA + A + H2O. In terms of biological role, catalyzes oxygen-dependent 5-hydroxyuridine (ho5U) modification at position 34 in tRNAs. This Shewanella sp. (strain MR-4) protein is tRNA uridine(34) hydroxylase.